We begin with the raw amino-acid sequence, 219 residues long: Casein kinase II subunit beta' (219 aa).

Threonine 2 bears the Phosphothreonine; by autocatalysis mark.

Belongs to the casein kinase 2 subunit beta family. In terms of assembly, tetramer of two alpha and two beta' subunits. Phosphorylated by alpha subunit.

Its function is as follows. Participates in Wnt signaling. Plays a complex role in regulating the basal catalytic activity of the alpha subunit. The protein is Casein kinase II subunit beta' (CkIIbeta2) of Drosophila melanogaster (Fruit fly).